The chain runs to 535 residues: GMP synthase [glutamine-hydrolyzing] (535 aa).

In terms of domain architecture, Glutamine amidotransferase type-1 spans 24–217 (KILIVDFGSQ…VRKVAGLTGD (194 aa)). C101 serves as the catalytic Nucleophile. Active-site residues include H191 and E193. Residues 218 to 410 (WTMRAFREEA…LGLPEIFVGR (193 aa)) form the GMPS ATP-PPase domain. Residue 245–251 (SGGVDSS) coordinates ATP.

Homodimer.

The enzyme catalyses XMP + L-glutamine + ATP + H2O = GMP + L-glutamate + AMP + diphosphate + 2 H(+). It functions in the pathway purine metabolism; GMP biosynthesis; GMP from XMP (L-Gln route): step 1/1. Functionally, catalyzes the synthesis of GMP from XMP. In Nitrobacter winogradskyi (strain ATCC 25391 / DSM 10237 / CIP 104748 / NCIMB 11846 / Nb-255), this protein is GMP synthase [glutamine-hydrolyzing].